The primary structure comprises 76 residues: U7-lycotoxin-Ls1b (76 aa).

The signal sequence occupies residues 1-22 (MKLISFTGLALLLIVSLIDVEA). Residues 23–26 (QNEG) constitute a propeptide that is removed on maturation.

The protein belongs to the neurotoxin 19 (CSTX) family. 07 (U7-Lctx) subfamily. In terms of processing, contains 4 disulfide bonds. In terms of tissue distribution, expressed by the venom gland.

Its subcellular location is the secreted. The sequence is that of U7-lycotoxin-Ls1b from Lycosa singoriensis (Wolf spider).